Consider the following 386-residue polypeptide: Succinate--CoA ligase [ADP-forming] subunit beta (386 aa).

The region spanning 9 to 244 is the ATP-grasp domain; sequence KDLLASYDVP…PSQENVRDVL (236 aa). Residues K46, 53–55, V102, and E107 contribute to the ATP site; that span reads GRG. Positions 199 and 213 each coordinate Mg(2+). Substrate-binding positions include N264 and 321–323; that span reads GIM.

Belongs to the succinate/malate CoA ligase beta subunit family. As to quaternary structure, heterotetramer of two alpha and two beta subunits. The cofactor is Mg(2+).

It carries out the reaction succinate + ATP + CoA = succinyl-CoA + ADP + phosphate. The catalysed reaction is GTP + succinate + CoA = succinyl-CoA + GDP + phosphate. Its pathway is carbohydrate metabolism; tricarboxylic acid cycle; succinate from succinyl-CoA (ligase route): step 1/1. In terms of biological role, succinyl-CoA synthetase functions in the citric acid cycle (TCA), coupling the hydrolysis of succinyl-CoA to the synthesis of either ATP or GTP and thus represents the only step of substrate-level phosphorylation in the TCA. The beta subunit provides nucleotide specificity of the enzyme and binds the substrate succinate, while the binding sites for coenzyme A and phosphate are found in the alpha subunit. This Chlamydia pneumoniae (Chlamydophila pneumoniae) protein is Succinate--CoA ligase [ADP-forming] subunit beta.